The following is a 443-amino-acid chain: Signal recognition particle 54 kDa protein (443 aa).

GTP contacts are provided by residues 107–114 (GVQGSGKT), 189–193 (DTAGR), and 247–250 (TKLD).

The protein belongs to the GTP-binding SRP family. SRP54 subfamily. In terms of assembly, part of the signal recognition particle protein translocation system, which is composed of SRP and FtsY. Archaeal SRP consists of a 7S RNA molecule of 300 nucleotides and two protein subunits: SRP54 and SRP19.

The protein resides in the cytoplasm. It catalyses the reaction GTP + H2O = GDP + phosphate + H(+). Involved in targeting and insertion of nascent membrane proteins into the cytoplasmic membrane. Binds to the hydrophobic signal sequence of the ribosome-nascent chain (RNC) as it emerges from the ribosomes. The SRP-RNC complex is then targeted to the cytoplasmic membrane where it interacts with the SRP receptor FtsY. The protein is Signal recognition particle 54 kDa protein of Pyrococcus abyssi (strain GE5 / Orsay).